A 250-amino-acid chain; its full sequence is 3-deoxy-manno-octulosonate cytidylyltransferase (250 aa).

The protein belongs to the KdsB family.

It localises to the cytoplasm. It catalyses the reaction 3-deoxy-alpha-D-manno-oct-2-ulosonate + CTP = CMP-3-deoxy-beta-D-manno-octulosonate + diphosphate. It participates in nucleotide-sugar biosynthesis; CMP-3-deoxy-D-manno-octulosonate biosynthesis; CMP-3-deoxy-D-manno-octulosonate from 3-deoxy-D-manno-octulosonate and CTP: step 1/1. Its pathway is bacterial outer membrane biogenesis; lipopolysaccharide biosynthesis. Activates KDO (a required 8-carbon sugar) for incorporation into bacterial lipopolysaccharide in Gram-negative bacteria. The protein is 3-deoxy-manno-octulosonate cytidylyltransferase of Yersinia enterocolitica serotype O:8 / biotype 1B (strain NCTC 13174 / 8081).